The following is a 97-amino-acid chain: U-scoloptoxin(10)-Sa2a (97 aa).

The signal sequence occupies residues 1–23 (MNKSMLIFFTILFLTYIIEEKEA).

This sequence belongs to the scoloptoxin-10 family. Contains 3 disulfide bonds. Expressed by the venom gland.

The protein resides in the secreted. The protein is U-scoloptoxin(10)-Sa2a of Scolopendra alternans (Florida Keys giant centipede).